The sequence spans 532 residues: Fatty-acid amide hydrolase 2 (532 aa).

A helical transmembrane segment spans residues 11 to 31 (LFLLRALGFLIGLVGRAALVL). Active-site charge relay system residues include Lys-131 and Ser-206. Ser-230 serves as the catalytic Acyl-ester intermediate.

This sequence belongs to the amidase family. Homodimer. In terms of tissue distribution, expressed in kidney, liver, lung, prostate, heart and ovary.

It is found in the membrane. The protein localises to the lipid droplet. The enzyme catalyses N-(5Z,8Z,11Z,14Z-eicosatetraenoyl)-ethanolamine + H2O = ethanolamine + (5Z,8Z,11Z,14Z)-eicosatetraenoate. It carries out the reaction (9Z)-octadecenamide + H2O = (9Z)-octadecenoate + NH4(+). The catalysed reaction is N-(9Z-octadecenoyl) ethanolamine + H2O = ethanolamine + (9Z)-octadecenoate. It catalyses the reaction N-hexadecanoylethanolamine + H2O = ethanolamine + hexadecanoate. With respect to regulation, inhibited by O-aryl carbamates and alpha-keto heterocytes. In terms of biological role, catalyzes the hydrolysis of endogenous amidated lipids like the sleep-inducing lipid oleamide ((9Z)-octadecenamide), the endocannabinoid anandamide (N-(5Z,8Z,11Z,14Z-eicosatetraenoyl)-ethanolamine), as well as other fatty amides, to their corresponding fatty acids, thereby regulating the signaling functions of these molecules. Hydrolyzes monounsaturated substrate anandamide preferentially as compared to polyunsaturated substrates. The chain is Fatty-acid amide hydrolase 2 (FAAH2) from Homo sapiens (Human).